The sequence spans 352 residues: Protein-glutamate methylesterase/protein-glutamine glutaminase 2 (352 aa).

The Response regulatory domain maps to 1-116 (MIVDDSAIVR…KDFIQDAASD (116 aa)). At D50 the chain carries 4-aspartylphosphate. The 193-residue stretch at 159–351 (SKTTEHVVAI…QEIMRYAHLK (193 aa)) folds into the CheB-type methylesterase domain. Active-site residues include S171, H197, and D293.

The protein belongs to the CheB family. Phosphorylated by CheA. Phosphorylation of the N-terminal regulatory domain activates the methylesterase activity.

It is found in the cytoplasm. The catalysed reaction is [protein]-L-glutamate 5-O-methyl ester + H2O = L-glutamyl-[protein] + methanol + H(+). It carries out the reaction L-glutaminyl-[protein] + H2O = L-glutamyl-[protein] + NH4(+). Involved in chemotaxis. Part of a chemotaxis signal transduction system that modulates chemotaxis in response to various stimuli. Catalyzes the demethylation of specific methylglutamate residues introduced into the chemoreceptors (methyl-accepting chemotaxis proteins or MCP) by CheR. Also mediates the irreversible deamidation of specific glutamine residues to glutamic acid. In Shewanella denitrificans (strain OS217 / ATCC BAA-1090 / DSM 15013), this protein is Protein-glutamate methylesterase/protein-glutamine glutaminase 2.